The primary structure comprises 77 residues: UPF0154 protein LCK_00994 (77 aa).

The chain crosses the membrane as a helical span at residues 5–25 (FGILIFVLGLVIGLVIGFFVA). Positions 50-77 (SMGQKPSQKKLNQMMAQMKQQSEQSQKK) are disordered.

It belongs to the UPF0154 family.

The protein localises to the cell membrane. This is UPF0154 protein LCK_00994 from Leuconostoc citreum (strain KM20).